Reading from the N-terminus, the 343-residue chain is Tumor necrosis factor receptor superfamily member wgn (343 aa).

Disordered stretches follow at residues 1–44 (MMPP…IGGS) and 74–96 (SSAA…SIAS). Residues 1-76 (MMPPRLPGGH…ATSASSSSSA (76 aa)) form the signal peptide. The span at 13-24 (AMRSRSSSSGHH) shows a compositional bias: low complexity. Basic residues predominate over residues 29-39 (FHKRRRRRQQH). The Extracellular portion of the chain corresponds to 77–201 (ANTDIAPPDP…AAWVLDWQTG (125 aa)). Residues 99–137 (PCAPQHWWDSQRDRCTPCTRCQGEMIPLRPCQLHTDTIC) form a TNFR-Cys repeat. Disulfide bonds link Cys-100/Cys-113, Cys-116/Cys-129, and Cys-119/Cys-137. The chain crosses the membrane as a helical span at residues 202–222 (VLYVAVLTCLVFFSVAACILI). Over 223–343 (HHMRQWRRME…GVRGCSGLKG (121 aa)) the chain is Cytoplasmic. Residues 225–257 (MRQWRRMERRLDQDVEELSTKLMAKLAEVQSLD) are a coiled coil.

As to quaternary structure, monomer. Interacts (via extracellular cystein-rich domain) with egr (via secreted TNF-homology soluble form); forms heterohexamers when 3 copies associate with egr trimers. Interacts with Traf6. Interacts with Moe. Expressed in the adult midgut; under normal conditions expressed at higher levels than the other TNF receptor grnd.

It is found in the cell membrane. Its subcellular location is the cytoplasmic vesicle membrane. In terms of biological role, receptor for egr. Involved in induction of apoptosis by triggering JNK signaling. Mediates the tumor suppressor activity of egr which eliminates oncogenic cells from epithelia, thereby maintaining epithelial integrity. Following UV-induced epidermal damage, binds to egr released from apoptotic epidermal cells and plays a role in development of thermal allodynia, a responsiveness to subthreshold thermal stimuli which are not normally perceived as noxious. Together with Moe, involved in control of axon targeting of R8 and R2-R5 photoreceptors, independent of egr. The polypeptide is Tumor necrosis factor receptor superfamily member wgn (Drosophila melanogaster (Fruit fly)).